The primary structure comprises 99 residues: MESLFIFAFGMMLSSASALSCIPCVPEECEDPGPCEYGKVLDPCQCCLICRKGPGEICGGPWNLQGVCAEGFACITLSGNPVMNLNGGGQEVGRCRKKY.

Residues 1 to 18 (MESLFIFAFGMMLSSASA) form the signal peptide. The 80-residue stretch at 19–98 (LSCIPCVPEE…GQEVGRCRKK (80 aa)) folds into the IGFBP N-terminal domain. O-linked (GalNAc...) serine glycosylation is present at Ser-20. Disulfide bonds link Cys-21–Cys-44, Cys-24–Cys-46, Cys-29–Cys-47, Cys-35–Cys-50, Cys-58–Cys-74, and Cys-68–Cys-95.

As to expression, expressed in hemocytes.

Its subcellular location is the secreted. In terms of biological role, has a role in the innate immune system. In Cupiennius salei (American wandering spider), this protein is Single insulin-like growth factor-binding domain protein-2.